Here is a 188-residue protein sequence, read N- to C-terminus: ATP synthase subunit b 1 (188 aa).

A helical membrane pass occupies residues 35–55; sequence VHFGSHLFWLAISFGLFYLFI.

This sequence belongs to the ATPase B chain family. As to quaternary structure, F-type ATPases have 2 components, F(1) - the catalytic core - and F(0) - the membrane proton channel. F(1) has five subunits: alpha(3), beta(3), gamma(1), delta(1), epsilon(1). F(0) has three main subunits: a(1), b(2) and c(10-14). The alpha and beta chains form an alternating ring which encloses part of the gamma chain. F(1) is attached to F(0) by a central stalk formed by the gamma and epsilon chains, while a peripheral stalk is formed by the delta and b chains.

Its subcellular location is the cell inner membrane. Functionally, f(1)F(0) ATP synthase produces ATP from ADP in the presence of a proton or sodium gradient. F-type ATPases consist of two structural domains, F(1) containing the extramembraneous catalytic core and F(0) containing the membrane proton channel, linked together by a central stalk and a peripheral stalk. During catalysis, ATP synthesis in the catalytic domain of F(1) is coupled via a rotary mechanism of the central stalk subunits to proton translocation. In terms of biological role, component of the F(0) channel, it forms part of the peripheral stalk, linking F(1) to F(0). This Bartonella henselae (strain ATCC 49882 / DSM 28221 / CCUG 30454 / Houston 1) (Rochalimaea henselae) protein is ATP synthase subunit b 1.